We begin with the raw amino-acid sequence, 588 residues long: Intracellular maltogenic amylase (588 aa).

Ca(2+) is bound by residues N149, S155, G174, and D176. Residues H249 and R325 each coordinate substrate. D327 functions as the Nucleophile in the catalytic mechanism. E356 (proton donor) is an active-site residue. Substrate-binding positions include H422 to D423, D467, and R471.

This sequence belongs to the glycosyl hydrolase 13 family. BbmA subfamily. Monomer or homodimer; in equilibrium. The cofactor is Ca(2+).

It localises to the cytoplasm. Hydrolyzes beta-cyclodextrin to maltose and glucose, soluble starch to maltose and glucose, and pullulan to panose with trace amounts of maltose and glucose. It is also able to hydrolyze acarbose. Can also exhibit a transglycosylation activity transferring glucose or maltose to another moiety of sugars by forming alpha-(1,6)- and alpha-(1,3)-glycosidic linkages upon the hydrolysis of substrate at concentrations of 5% or higher. In Bacillus subtilis (strain 168), this protein is Intracellular maltogenic amylase (bbmA).